A 394-amino-acid polypeptide reads, in one-letter code: NAD(P)H-quinone oxidoreductase subunit H (394 aa).

This sequence belongs to the complex I 49 kDa subunit family. As to quaternary structure, NDH-1 can be composed of about 15 different subunits; different subcomplexes with different compositions have been identified which probably have different functions.

It localises to the cellular thylakoid membrane. It carries out the reaction a plastoquinone + NADH + (n+1) H(+)(in) = a plastoquinol + NAD(+) + n H(+)(out). The enzyme catalyses a plastoquinone + NADPH + (n+1) H(+)(in) = a plastoquinol + NADP(+) + n H(+)(out). Functionally, NDH-1 shuttles electrons from an unknown electron donor, via FMN and iron-sulfur (Fe-S) centers, to quinones in the respiratory and/or the photosynthetic chain. The immediate electron acceptor for the enzyme in this species is believed to be plastoquinone. Couples the redox reaction to proton translocation, and thus conserves the redox energy in a proton gradient. Cyanobacterial NDH-1 also plays a role in inorganic carbon-concentration. This chain is NAD(P)H-quinone oxidoreductase subunit H, found in Prochlorococcus marinus (strain NATL2A).